Consider the following 90-residue polypeptide: UPF0223 protein LMHCC_1569 (90 aa).

Belongs to the UPF0223 family.

The sequence is that of UPF0223 protein LMHCC_1569 from Listeria monocytogenes serotype 4a (strain HCC23).